We begin with the raw amino-acid sequence, 246 residues long: Caffeoyl-CoA O-methyltransferase 1 (246 aa).

Residue lysine 21 participates in substrate binding. S-adenosyl-L-methionine-binding positions include threonine 63, glutamate 85, 87–88, serine 93, aspartate 111, and alanine 140; that span reads GV. Residue aspartate 162 participates in substrate binding. Aspartate 162 is a binding site for a divalent metal cation. Aspartate 164 is an S-adenosyl-L-methionine binding site. 2 residues coordinate a divalent metal cation: aspartate 188 and asparagine 189. Asparagine 193 is a binding site for substrate.

The protein belongs to the class I-like SAM-binding methyltransferase superfamily. Cation-dependent O-methyltransferase family. CCoAMT subfamily. A divalent metal cation serves as cofactor.

The catalysed reaction is (E)-caffeoyl-CoA + S-adenosyl-L-methionine = (E)-feruloyl-CoA + S-adenosyl-L-homocysteine + H(+). It participates in aromatic compound metabolism; phenylpropanoid biosynthesis. Functionally, methylates caffeoyl-CoA to feruloyl-CoA and 5-hydroxyferuloyl-CoA to sinapoyl-CoA. Plays a role in the synthesis of feruloylated polysaccharides. Involved in the reinforcement of the plant cell wall. Also involved in the responding to wounding or pathogen challenge by the increased formation of cell wall-bound ferulic acid polymers. The sequence is that of Caffeoyl-CoA O-methyltransferase 1 (CCOMT) from Eucalyptus globulus (Tasmanian blue gum).